A 158-amino-acid polypeptide reads, in one-letter code: Lipoprotein signal peptidase (158 aa).

The next 4 helical transmembrane spans lie at Leu7–Val27, Leu38–Leu58, Leu68–Leu88, and Leu92–Gly112. Catalysis depends on residues Asp116 and Asp132. A helical membrane pass occupies residues Phe125–Ala145.

The protein belongs to the peptidase A8 family.

It localises to the cell inner membrane. The catalysed reaction is Release of signal peptides from bacterial membrane prolipoproteins. Hydrolyzes -Xaa-Yaa-Zaa-|-(S,diacylglyceryl)Cys-, in which Xaa is hydrophobic (preferably Leu), and Yaa (Ala or Ser) and Zaa (Gly or Ala) have small, neutral side chains.. The protein operates within protein modification; lipoprotein biosynthesis (signal peptide cleavage). In terms of biological role, this protein specifically catalyzes the removal of signal peptides from prolipoproteins. This chain is Lipoprotein signal peptidase, found in Nostoc punctiforme (strain ATCC 29133 / PCC 73102).